A 165-amino-acid polypeptide reads, in one-letter code: Cytochrome c-550-like protein (165 aa).

The first 38 residues, 1 to 38 (MPHLDQKLPMRWRIPSRLWAWVGILALLWLGLASPVAA), serve as a signal peptide directing secretion. Heme c is bound by residues cysteine 83, cysteine 86, histidine 87, and cysteine 137.

This sequence belongs to the cytochrome c family. PsbV subfamily. It depends on heme c as a cofactor.

The protein localises to the cellular thylakoid membrane. Functionally, possible low-potential cytochrome c. The sequence is that of Cytochrome c-550-like protein (psbV2) from Synechococcus sp. (strain JA-2-3B'a(2-13)) (Cyanobacteria bacterium Yellowstone B-Prime).